A 710-amino-acid chain; its full sequence is Cleavage and polyadenylation factor complex subunit C74.02c (710 aa).

Residues 1–30 are compositionally biased toward polar residues; sequence MDNWNSVRNVSSDRQTSKTSENPPHTSNEY. 3 disordered regions span residues 1 to 42, 85 to 170, and 361 to 510; these read MDNW…LSPD, ASSN…SDVN, and GPAM…SVSW. The span at 86–108 shows a compositional bias: low complexity; sequence SSNPSLISSGSSQTGSPSQSLSS. The segment covering 109-170 has biased composition (polar residues); sequence NKEPSSPGIS…EVPSSKSDVN (62 aa). Low complexity-rich tracts occupy residues 361-383 and 401-420; these read GPAM…SSNS and LASS…PLTK. Residues 421–430 show a composition bias toward polar residues; it reads QQTNPSTPLS. Residues 437-447 show a composition bias toward basic and acidic residues; it reads KGREKEKDKDS.

In terms of assembly, component of the cleavage and polyadenylation factor (CPF) complex.

Its subcellular location is the cytoplasm. The protein localises to the nucleus. In terms of biological role, RNA-binding component of the cleavage and polyadenylation factor (CPF) complex, which plays a key role in polyadenylation-dependent pre-mRNA 3'-end formation. Involved in poly(A) site recognition. May be involved in coupling transcription termination and mRNA 3'-end formation. This is Cleavage and polyadenylation factor complex subunit C74.02c from Schizosaccharomyces pombe (strain 972 / ATCC 24843) (Fission yeast).